The sequence spans 272 residues: Endogenous Bornavirus-like nucleoprotein 2 (272 aa).

The disordered stretch occupies residues 48–70 (MSHLRKDSQPSSPGDDAMDRSGL).

May act as an RNA-binding protein. The C-terminal region is highly homologous to the bornavirus nucleocapsid N protein that binds viral RNA and oligomerizes. The viral protein also possesses a nuclear import and a nuclear export signal. These 2 signals seem absent in EBLN-2 supporting an unrelated function in Human. The polypeptide is Endogenous Bornavirus-like nucleoprotein 2 (EBLN2) (Homo sapiens (Human)).